A 301-amino-acid polypeptide reads, in one-letter code: tRNA uridine(34) hydroxylase (301 aa).

The region spanning 120 to 214 is the Rhodanese domain; the sequence is SAPDVAVIDT…YLEDVPEDQS (95 aa). Catalysis depends on C174, which acts as the Cysteine persulfide intermediate.

This sequence belongs to the TrhO family.

The enzyme catalyses uridine(34) in tRNA + AH2 + O2 = 5-hydroxyuridine(34) in tRNA + A + H2O. Catalyzes oxygen-dependent 5-hydroxyuridine (ho5U) modification at position 34 in tRNAs. The protein is tRNA uridine(34) hydroxylase of Jannaschia sp. (strain CCS1).